Reading from the N-terminus, the 1636-residue chain is Tyrosine-protein phosphatase non-receptor type 23 (1636 aa).

Residues 8–394 (PMIWLDLKEA…AKIEDKNEVL (387 aa)) enclose the BRO1 domain. TPR repeat units follow at residues 250-283 (AVAHLHMGKQAEEQQKFGERVAYFQSALDKLNEA) and 374-407 (EEKAKLLREMMAKIEDKNEVLDQFMDSMQLDPET). A coiled-coil region spans residues 550-623 (KAVLQNLKRI…VYLEQNLAAQ (74 aa)). A compositionally biased stretch (basic and acidic residues) spans 701-714 (EAARQQLLDRELKK). Disordered stretches follow at residues 701–812 (EAAR…GPHA) and 888–1151 (QAPI…AAEG). The residue at position 733 (Ser733) is a Phosphoserine. Residues 770–1130 (HFPPSPFPSS…SSSPESQHGG (361 aa)) are his. Composition is skewed to pro residues over residues 898–922 (RPNPTPAPPPPCFPVPPPQPLPTPY) and 950–962 (RIGPQPQPHPQPH). Position 950 is an omega-N-methylarginine (Arg950). 6 repeat units span residues 953–954 (PQ), 955–956 (PQ), 957–958 (PH), 959–960 (PQ), 961–962 (PH), and 963–964 (PS). The tract at residues 953 to 964 (PQPQPHPQPHPS) is 6 X 2 AA approximate tandem repeats of P-Q. Composition is skewed to pro residues over residues 983 to 1002 (LFPPQAPGLLPPQSPYPYAP), 1036 to 1050 (FPSPGPPQPPHPPLA), and 1083 to 1109 (HLVPSPAPSPGPGPVPPRPPAAEPPPC). Positions 1120–1131 (LSSSPESQHGGT) are enriched in polar residues. Phosphoserine is present on residues Ser1122 and Ser1123. A Phosphothreonine modification is found at Thr1131. Residues 1192–1452 (DTVWRELQDA…RFCYEAVVRH (261 aa)) enclose the Tyrosine-protein phosphatase domain. Catalysis depends on Cys1392, which acts as the Phosphocysteine intermediate. The segment at 1513–1636 (LESPVASLPG…LDPLWTLNKT (124 aa)) is disordered. Pro residues-rich tracts occupy residues 1523–1533 (PAEPPGLPPAS) and 1542–1556 (SSSPPPLSSPLPEAP). Residues 1567–1587 (APSSGPPSSSLELLASLTPEA) show a composition bias toward low complexity. At Arg1615 the chain carries Omega-N-methylarginine.

The protein belongs to the protein-tyrosine phosphatase family. Non-receptor class subfamily. Interacts with GRAP2 and GRB2. Interacts with UBAP1. Interacts with CHMP4B.

It localises to the nucleus. It is found in the cytoplasm. The protein localises to the cytoplasmic vesicle. The protein resides in the endosome. Its subcellular location is the cytoskeleton. It localises to the cilium basal body. It is found in the early endosome. The catalysed reaction is O-phospho-L-tyrosyl-[protein] + H2O = L-tyrosyl-[protein] + phosphate. Plays a role in sorting of endocytic ubiquitinated cargos into multivesicular bodies (MVBs) via its interaction with the ESCRT-I complex (endosomal sorting complex required for transport I), and possibly also other ESCRT complexes. May act as a negative regulator of Ras-mediated mitogenic activity. Plays a role in ciliogenesis. In Homo sapiens (Human), this protein is Tyrosine-protein phosphatase non-receptor type 23 (PTPN23).